A 236-amino-acid chain; its full sequence is Methylosome subunit pICln (236 aa).

At Ser2 the chain carries N-acetylserine. Positions 88–109 are disordered; it reads EESKEPPSDEDEEDNDDIEPIS. Ser95, Ser143, Ser192, Ser194, Ser197, and Ser209 each carry phosphoserine. The segment covering 95 to 107 has biased composition (acidic residues); sequence SDEDEEDNDDIEP. Thr222 bears the Phosphothreonine mark.

It belongs to the pICln (TC 1.A.47) family. In terms of assembly, component of the methylosome, a 20S complex containing at least PRMT5/SKB1, WDR77/MEP50 and CLNS1A/pICln. May mediate SNRPD1 and SNRPD3 methylation. Forms a 6S pICln-Sm complex composed of CLNS1A/pICln, SNRPD1, SNRPD2, SNRPE, SNRPF and SNRPG; ring-like structure where CLNS1A/pICln mimics additional Sm proteins and which is unable to assemble into the core snRNP. Interacts with LSM10 and LSM11.

Its subcellular location is the cytoplasm. The protein resides in the cytosol. It localises to the nucleus. The protein localises to the cytoskeleton. Involved in both the assembly of spliceosomal snRNPs and the methylation of Sm proteins. Chaperone that regulates the assembly of spliceosomal U1, U2, U4 and U5 small nuclear ribonucleoproteins (snRNPs), the building blocks of the spliceosome, and thereby plays an important role in the splicing of cellular pre-mRNAs. Most spliceosomal snRNPs contain a common set of Sm proteins SNRPB, SNRPD1, SNRPD2, SNRPD3, SNRPE, SNRPF and SNRPG that assemble in a heptameric protein ring on the Sm site of the small nuclear RNA to form the core snRNP (Sm core). In the cytosol, the Sm proteins SNRPD1, SNRPD2, SNRPE, SNRPF and SNRPG are trapped in an inactive 6S pICln-Sm complex by the chaperone CLNS1A that controls the assembly of the core snRNP. Dissociation by the SMN complex of CLNS1A from the trapped Sm proteins and their transfer to an SMN-Sm complex triggers the assembly of core snRNPs and their transport to the nucleus. The protein is Methylosome subunit pICln (Clns1a) of Mus musculus (Mouse).